The chain runs to 907 residues: Protein translocase subunit SecA (907 aa).

Residues Gln87, 105-109 (GEGKT), and Asp510 contribute to the ATP site. Residues Cys892, Cys894, Cys903, and His904 each coordinate Zn(2+).

The protein belongs to the SecA family. As to quaternary structure, monomer and homodimer. Part of the essential Sec protein translocation apparatus which comprises SecA, SecYEG and auxiliary proteins SecDF-YajC and YidC. Zn(2+) is required as a cofactor.

The protein resides in the cell inner membrane. Its subcellular location is the cytoplasm. It carries out the reaction ATP + H2O + cellular proteinSide 1 = ADP + phosphate + cellular proteinSide 2.. Functionally, part of the Sec protein translocase complex. Interacts with the SecYEG preprotein conducting channel. Has a central role in coupling the hydrolysis of ATP to the transfer of proteins into and across the cell membrane, serving both as a receptor for the preprotein-SecB complex and as an ATP-driven molecular motor driving the stepwise translocation of polypeptide chains across the membrane. The polypeptide is Protein translocase subunit SecA (Acinetobacter baumannii (strain AB0057)).